A 141-amino-acid polypeptide reads, in one-letter code: Hemoglobin subunit alpha (141 aa).

Residues 1–141 (VLSPGDKSNI…VSTVLTSKYR (141 aa)) form the Globin domain. Ser3 carries the post-translational modification Phosphoserine. N6-succinyllysine occurs at positions 7 and 11. The residue at position 16 (Lys16) is an N6-acetyllysine; alternate. Lys16 is subject to N6-succinyllysine; alternate. The residue at position 24 (Tyr24) is a Phosphotyrosine. The residue at position 35 (Ser35) is a Phosphoserine. Position 40 is an N6-succinyllysine (Lys40). The residue at position 49 (Ser49) is a Phosphoserine. His58 serves as a coordination point for O2. His87 provides a ligand contact to heme b. A Phosphoserine modification is found at Ser102. Position 108 is a phosphothreonine (Thr108). Ser124 bears the Phosphoserine mark. Residues Thr134 and Thr137 each carry the phosphothreonine modification. Ser138 bears the Phosphoserine mark.

Belongs to the globin family. In terms of assembly, heterotetramer of two alpha chains and two beta chains. In terms of tissue distribution, red blood cells.

In terms of biological role, involved in oxygen transport from the lung to the various peripheral tissues. Hemopressin acts as an antagonist peptide of the cannabinoid receptor CNR1. Hemopressin-binding efficiently blocks cannabinoid receptor CNR1 and subsequent signaling. The polypeptide is Hemoglobin subunit alpha (HBA) (Tupaia glis (Common tree shrew)).